Reading from the N-terminus, the 160-residue chain is Deoxyuridine 5'-triphosphate nucleotidohydrolase (160 aa).

Substrate is bound by residues 76–78, Asn-89, and 93–95; these read RSG and TID. The segment covering 139–149 has biased composition (basic and acidic residues); it reads HTLSDTERGED. The segment at 139-160 is disordered; sequence HTLSDTERGEDGFGSTGHGSHQ. Positions 150–160 are enriched in gly residues; that stretch reads GFGSTGHGSHQ.

The protein belongs to the dUTPase family. Requires Mg(2+) as cofactor.

The catalysed reaction is dUTP + H2O = dUMP + diphosphate + H(+). The protein operates within pyrimidine metabolism; dUMP biosynthesis; dUMP from dCTP (dUTP route): step 2/2. This enzyme is involved in nucleotide metabolism: it produces dUMP, the immediate precursor of thymidine nucleotides and it decreases the intracellular concentration of dUTP so that uracil cannot be incorporated into DNA. The chain is Deoxyuridine 5'-triphosphate nucleotidohydrolase from Beijerinckia indica subsp. indica (strain ATCC 9039 / DSM 1715 / NCIMB 8712).